Here is a 514-residue protein sequence, read N- to C-terminus: Multifunctional alkaline phosphatase superfamily protein PehA (514 aa).

Residues Asp12, Cys57, Asp324, and His325 each coordinate Mn(2+). The active-site Nucleophile is Cys57. Cys57 bears the 3-oxoalanine (Cys) mark.

This sequence belongs to the alkaline phosphatase superfamily. In terms of assembly, homotetramer. The cofactor is Mn(2+). The conversion to 3-oxoalanine (also known as C-formylglycine, FGly), of a serine or cysteine residue in prokaryotes and of a cysteine residue in eukaryotes, is critical for catalytic activity. Phosphate triester hydrolytic activity is retained with unmodified cysteine acting as a nucleophile.

Its activity is regulated as follows. Anions including Cl(-) and CH3COO(-), and SO4(2-) salts stimulate activity 20-40% at 100 mM. Functionally, hydrolytic enzyme with a broad substrate specificity acting on phosphate diesters and phosphonate monoesters. Hydrolyzes phosphate mono- and triesters, sulfate monoesters and sulfonate monoesters. Hydrolyzes glyphosate monoesters. Does not hydrolyze DNA or cGMP. Hydrolyzes glyceryl glyphosate, but this substrate has a much lower affinity than the glyphosate monoesters. In Trinickia caryophylli (Paraburkholderia caryophylli), this protein is Multifunctional alkaline phosphatase superfamily protein PehA.